Reading from the N-terminus, the 427-residue chain is V-type proton ATPase subunit C 2 (427 aa).

The tract at residues 298–320 (PLGNPARPAAGQTDRDRESEGEG) is disordered.

This sequence belongs to the V-ATPase C subunit family. As to quaternary structure, V-ATPase is a heteromultimeric enzyme made up of two complexes: the ATP-hydrolytic V1 complex and the proton translocation V0 complex. The V1 complex consists of three catalytic AB heterodimers that form a heterohexamer, three peripheral stalks each consisting of EG heterodimers, one central rotor including subunits D and F, and the regulatory subunits C and H. The proton translocation complex V0 consists of the proton transport subunit a, a ring of proteolipid subunits c9c'', rotary subunit d, subunits e and f, and the accessory subunits ATP6AP1/Ac45 and ATP6AP2/PRR. In terms of tissue distribution, predominantly expressed in the lung and kidney. Isoform 1 is lung-specific while isoform 3 is a kidney-specific isoform. Isoform 1 is localized in the lamellar bodies of type II alveolar cells. Isoform 2 is strongly expressed in the cortical and medulla collecting ducts and is found in the plasma membranes of renal alpha and beta intercalated cells.

Its function is as follows. Subunit of the V1 complex of vacuolar(H+)-ATPase (V-ATPase), a multisubunit enzyme composed of a peripheral complex (V1) that hydrolyzes ATP and a membrane integral complex (V0) that translocates protons. V-ATPase is responsible for acidifying and maintaining the pH of intracellular compartments and in some cell types, is targeted to the plasma membrane, where it is responsible for acidifying the extracellular environment. Subunit C is necessary for the assembly of the catalytic sector of the enzyme and is likely to have a specific function in its catalytic activity. This chain is V-type proton ATPase subunit C 2 (Atp6v1c2), found in Mus musculus (Mouse).